Reading from the N-terminus, the 66-residue chain is Beta-toxin Cbo4 (66 aa).

Residues 1–66 (KEGYIVDYHT…VWPLPNKRCK (66 aa)) form the LCN-type CS-alpha/beta domain. Cystine bridges form between C12/C65, C16/C41, C25/C46, and C29/C48. Position 66 is a lysine amide (K66).

Belongs to the long (4 C-C) scorpion toxin superfamily. Sodium channel inhibitor family. Beta subfamily. In terms of tissue distribution, expressed by the venom gland.

The protein localises to the secreted. Functionally, beta toxins bind voltage-independently at site-4 of sodium channels and shift the voltage of activation toward more negative potentials thereby affecting sodium channel activation and promoting spontaneous and repetitive firing. Is active on the human voltage-gated sodium channels Nav1.4/SCN4A, Nav1.5/SCN5A and Nav1.6/SCN8A when tested at 200 nM. In vivo, is toxic to mice when intraperitoneally injected. The chain is Beta-toxin Cbo4 from Centruroides bonito (Scorpion).